The following is a 466-amino-acid chain: Light-independent protochlorophyllide reductase subunit N (466 aa).

[4Fe-4S] cluster is bound by residues C23, C48, and C108.

It belongs to the BchN/ChlN family. In terms of assembly, protochlorophyllide reductase is composed of three subunits; ChlL, ChlN and ChlB. Forms a heterotetramer of two ChlB and two ChlN subunits. [4Fe-4S] cluster is required as a cofactor.

The enzyme catalyses chlorophyllide a + oxidized 2[4Fe-4S]-[ferredoxin] + 2 ADP + 2 phosphate = protochlorophyllide a + reduced 2[4Fe-4S]-[ferredoxin] + 2 ATP + 2 H2O. The protein operates within porphyrin-containing compound metabolism; chlorophyll biosynthesis (light-independent). In terms of biological role, component of the dark-operative protochlorophyllide reductase (DPOR) that uses Mg-ATP and reduced ferredoxin to reduce ring D of protochlorophyllide (Pchlide) to form chlorophyllide a (Chlide). This reaction is light-independent. The NB-protein (ChlN-ChlB) is the catalytic component of the complex. The sequence is that of Light-independent protochlorophyllide reductase subunit N from Synechococcus elongatus (strain ATCC 33912 / PCC 7942 / FACHB-805) (Anacystis nidulans R2).